We begin with the raw amino-acid sequence, 170 residues long: Probable chorismate pyruvate-lyase (170 aa).

Residues R77, L114, and E157 each contribute to the substrate site.

It belongs to the UbiC family.

The protein localises to the cytoplasm. The enzyme catalyses chorismate = 4-hydroxybenzoate + pyruvate. It participates in cofactor biosynthesis; ubiquinone biosynthesis. Removes the pyruvyl group from chorismate, with concomitant aromatization of the ring, to provide 4-hydroxybenzoate (4HB) for the ubiquinone pathway. The polypeptide is Probable chorismate pyruvate-lyase (Pasteurella multocida (strain Pm70)).